A 426-amino-acid polypeptide reads, in one-letter code: C4-dicarboxylate transport protein (426 aa).

8 helical membrane passes run 8 to 28, 44 to 64, 78 to 98, 148 to 168, 173 to 193, 222 to 242, 297 to 317, and 355 to 375; these read VLYV…HFYP, LIKM…IAGM, LLYF…ATHV, GEIL…ATAG, VVTG…RIIT, LIGT…GIIA, GYSF…LFIA, and AATL…ILGI.

This sequence belongs to the dicarboxylate/amino acid:cation symporter (DAACS) (TC 2.A.23) family.

The protein resides in the cell inner membrane. In terms of biological role, responsible for the transport of dicarboxylates such as succinate, fumarate, and malate from the periplasm across the membrane. In Paraburkholderia xenovorans (strain LB400), this protein is C4-dicarboxylate transport protein.